Consider the following 312-residue polypeptide: MILVFCGTPRFAVPSLEHIVRAGHDVRLVVTQPDRPKGRGMGLAFSPVKDAALALNLPVTQPEKIKNNEEFRAQLSAIAPDAIIVVGYGRIIPQWMIDLPPLGNINVHASLLPKYRGAAPIQWAIAMGEAVTGVTTMKIDAGLDTGDMLLQAEMPIAPEDTSESLAPRLAELGAELLVETLARLEGGVIAAVPQNHAEHTLAPILKKEDGQIDFHRSAQEILNRLRGFTPWPGAFTQFRGKGFFIHQARAVAATLEPGELRIEGENLLVGAGHNTALELLEIQLEGKKRMPARDFINGYRPNSADKLGRLSS.

(6S)-5,6,7,8-tetrahydrofolate is bound at residue 110–113 (SLLP).

It belongs to the Fmt family.

It carries out the reaction L-methionyl-tRNA(fMet) + (6R)-10-formyltetrahydrofolate = N-formyl-L-methionyl-tRNA(fMet) + (6S)-5,6,7,8-tetrahydrofolate + H(+). Attaches a formyl group to the free amino group of methionyl-tRNA(fMet). The formyl group appears to play a dual role in the initiator identity of N-formylmethionyl-tRNA by promoting its recognition by IF2 and preventing the misappropriation of this tRNA by the elongation apparatus. This is Methionyl-tRNA formyltransferase from Koribacter versatilis (strain Ellin345).